The following is a 206-amino-acid chain: Cytochrome c oxidase subunit 3 (206 aa).

5 consecutive transmembrane segments (helical) span residues 26 to 46, 68 to 88, 97 to 117, 143 to 163, and 185 to 205; these read FLGF…FFGT, LVFI…LAMF, AMMI…GFEI, LVGL…VLLI, and WHFI…MGVG.

Belongs to the cytochrome c oxidase subunit 3 family.

The protein resides in the cell membrane. The catalysed reaction is 4 Fe(II)-[cytochrome c] + O2 + 8 H(+)(in) = 4 Fe(III)-[cytochrome c] + 2 H2O + 4 H(+)(out). This is Cytochrome c oxidase subunit 3 (ctaE) from Alkalihalophilus pseudofirmus (strain ATCC BAA-2126 / JCM 17055 / OF4) (Bacillus pseudofirmus).